The following is a 129-amino-acid chain: D-ribose pyranase (129 aa).

Histidine 20 functions as the Proton donor in the catalytic mechanism. Residues aspartate 28, histidine 96, and 118–120 (YAN) contribute to the substrate site.

Belongs to the RbsD / FucU family. RbsD subfamily. Homodecamer.

The protein resides in the cytoplasm. It catalyses the reaction beta-D-ribopyranose = beta-D-ribofuranose. Its pathway is carbohydrate metabolism; D-ribose degradation; D-ribose 5-phosphate from beta-D-ribopyranose: step 1/2. Functionally, catalyzes the interconversion of beta-pyran and beta-furan forms of D-ribose. The chain is D-ribose pyranase from Streptomyces coelicolor (strain ATCC BAA-471 / A3(2) / M145).